Here is a 244-residue protein sequence, read N- to C-terminus: Large ribosomal subunit protein uL30w (244 aa).

It belongs to the universal ribosomal protein uL30 family.

The sequence is that of Large ribosomal subunit protein uL30w (RPL7D) from Arabidopsis thaliana (Mouse-ear cress).